The following is a 660-amino-acid chain: Acetyl-coenzyme A synthetase (660 aa).

CoA is bound by residues 197–200 (RGGK) and Thr-317. ATP is bound by residues 397–399 (GEP), 421–426 (DTFWQT), Asp-512, and Arg-528. Residue Ser-536 coordinates CoA. Arg-539 lines the ATP pocket. 2 residues coordinate Mg(2+): Val-550 and Val-555. An N6-acetyllysine modification is found at Lys-625.

Belongs to the ATP-dependent AMP-binding enzyme family. The cofactor is Mg(2+). Acetylated. Deacetylation by the SIR2-homolog deacetylase activates the enzyme.

The catalysed reaction is acetate + ATP + CoA = acetyl-CoA + AMP + diphosphate. In terms of biological role, catalyzes the conversion of acetate into acetyl-CoA (AcCoA), an essential intermediate at the junction of anabolic and catabolic pathways. AcsA undergoes a two-step reaction. In the first half reaction, AcsA combines acetate with ATP to form acetyl-adenylate (AcAMP) intermediate. In the second half reaction, it can then transfer the acetyl group from AcAMP to the sulfhydryl group of CoA, forming the product AcCoA. In Herminiimonas arsenicoxydans, this protein is Acetyl-coenzyme A synthetase.